The following is a 371-amino-acid chain: Putative glutamate--cysteine ligase 2 (371 aa).

Belongs to the glutamate--cysteine ligase type 2 family. YbdK subfamily.

The catalysed reaction is L-cysteine + L-glutamate + ATP = gamma-L-glutamyl-L-cysteine + ADP + phosphate + H(+). ATP-dependent carboxylate-amine ligase which exhibits weak glutamate--cysteine ligase activity. The polypeptide is Putative glutamate--cysteine ligase 2 (Nitrosospira multiformis (strain ATCC 25196 / NCIMB 11849 / C 71)).